The primary structure comprises 276 residues: L-aminoadipate-semialdehyde dehydrogenase-phosphopantetheinyl transferase (276 aa).

This sequence belongs to the P-Pant transferase superfamily. AcpS family.

The enzyme catalyses apo-[ACP] + CoA = holo-[ACP] + adenosine 3',5'-bisphosphate + H(+). Functionally, catalyzes the transfer of a 4'-phosphopantetheine moiety from coenzyme A to a serine residue of acceptor proteins, such as alpha-aminoadipate reductase. Necessary for alpha-aminoadipate reductase activity. The protein is L-aminoadipate-semialdehyde dehydrogenase-phosphopantetheinyl transferase (LYS5) of Eremothecium gossypii (strain ATCC 10895 / CBS 109.51 / FGSC 9923 / NRRL Y-1056) (Yeast).